A 512-amino-acid chain; its full sequence is MKSKKQTKLLLILDGWGYSETIQNNAIALANTPVWDKLNQTFLHSLIHTSGKDVGLPGKQMGNSEVGHLNLGAGRIVKQDFTRIYNELQNGDFFRNPILKNSLEYANDNNKAVHIMGLLSDGGVHSHEEQIHAMLEMTHKQGCKNVYLHLFTDGRDCAQKSAEKYIQKFEEKMAILGTGEIVSIIGRYFSMDRDNRWSRIRCAYELIAKGKAKFLAQSALHAVELAYARGETDEFIQSTSIKIPISIKKGDVLIFMNYRADRARQITRAFTDENLQGFSRGTFVPTQFICLTEYKKDFNLPVAYPSSKLNNVLGKYLSNLGMTQLRIAETEKYAHVTFFLNGGVEQAFNGEDRILIPSPDVATYDLQPEMSAFELTDALIESIESQKYDLIICNFANTDMVGHSGKLNATIKAVETIDSCLGIIHKAMFAISGEILITADHGNAEQMINPKTHEVHTAHTNNPVPLIFVSERKADISEPEKGALSDIAPTLLAMMDIEKPNEMTGNSLLTFK.

Aspartate 14 and serine 64 together coordinate Mn(2+). The Phosphoserine intermediate role is filled by serine 64. Substrate contacts are provided by residues histidine 125, 155-156, arginine 187, arginine 193, 259-262, and lysine 332; these read RD and RADR. 5 residues coordinate Mn(2+): aspartate 399, histidine 403, aspartate 440, histidine 441, and histidine 459.

Belongs to the BPG-independent phosphoglycerate mutase family. In terms of assembly, monomer. Mn(2+) serves as cofactor.

The enzyme catalyses (2R)-2-phosphoglycerate = (2R)-3-phosphoglycerate. Its pathway is carbohydrate degradation; glycolysis; pyruvate from D-glyceraldehyde 3-phosphate: step 3/5. Its function is as follows. Catalyzes the interconversion of 2-phosphoglycerate and 3-phosphoglycerate. The chain is 2,3-bisphosphoglycerate-independent phosphoglycerate mutase from Ruthia magnifica subsp. Calyptogena magnifica.